The sequence spans 490 residues: Argininosuccinate lyase (490 aa).

It belongs to the lyase 1 family. Argininosuccinate lyase subfamily.

It localises to the cytoplasm. The enzyme catalyses 2-(N(omega)-L-arginino)succinate = fumarate + L-arginine. It functions in the pathway amino-acid biosynthesis; L-arginine biosynthesis; L-arginine from L-ornithine and carbamoyl phosphate: step 3/3. The polypeptide is Argininosuccinate lyase (Bifidobacterium longum (strain DJO10A)).